The chain runs to 196 residues: Imidazoleglycerol-phosphate dehydratase (196 aa).

Belongs to the imidazoleglycerol-phosphate dehydratase family.

It is found in the cytoplasm. The catalysed reaction is D-erythro-1-(imidazol-4-yl)glycerol 3-phosphate = 3-(imidazol-4-yl)-2-oxopropyl phosphate + H2O. The protein operates within amino-acid biosynthesis; L-histidine biosynthesis; L-histidine from 5-phospho-alpha-D-ribose 1-diphosphate: step 6/9. This chain is Imidazoleglycerol-phosphate dehydratase, found in Zymomonas mobilis subsp. mobilis (strain ATCC 31821 / ZM4 / CP4).